The primary structure comprises 206 residues: Ribosomal RNA large subunit methyltransferase E (206 aa).

The S-adenosyl-L-methionine site is built by Gly60, Trp62, Asp80, Asp96, and Asp121. Lys161 functions as the Proton acceptor in the catalytic mechanism.

The protein belongs to the class I-like SAM-binding methyltransferase superfamily. RNA methyltransferase RlmE family.

The protein resides in the cytoplasm. The enzyme catalyses uridine(2552) in 23S rRNA + S-adenosyl-L-methionine = 2'-O-methyluridine(2552) in 23S rRNA + S-adenosyl-L-homocysteine + H(+). In terms of biological role, specifically methylates the uridine in position 2552 of 23S rRNA at the 2'-O position of the ribose in the fully assembled 50S ribosomal subunit. This chain is Ribosomal RNA large subunit methyltransferase E, found in Francisella tularensis subsp. tularensis (strain FSC 198).